Consider the following 740-residue polypeptide: Death domain-associated protein 6 (740 aa).

The tract at residues 1 to 55 (MATANSIIVLDDDDEDEAAAQPGPSHPLPNAASPGAEAPSSSEPHGARGSSSSGG) is disordered. Positions 1–160 (MATANSIIVL…TSNEPSGNNP (160 aa)) are necessary for interaction with USP7 and ATRX. S25 is subject to Phosphoserine. A compositionally biased stretch (low complexity) spans 29-55 (PNAASPGAEAPSSSEPHGARGSSSSGG). K142 is covalently cross-linked (Glycyl lysine isopeptide (Lys-Gly) (interchain with G-Cter in SUMO2)). Positions 147–185 (PAATTSNEPSGNNPPTHLSLDPTNAENTASQSPRTRGSR) are disordered. The segment covering 149–181 (ATTSNEPSGNNPPTHLSLDPTNAENTASQSPRT) has biased composition (polar residues). S178 and S213 each carry phosphoserine. Coiled-coil stretches lie at residues 180–217 (RTRGSRRQIQRLEQLLALYVAEIRRLQEKELDLSELDD) and 358–399 (ARRL…ARLQ). The interaction with histone H3.3 stretch occupies residues 183–417 (GSRRQIQRLE…TPEASLDSGE (235 aa)). Residues 347–570 (GVDPALSDPV…SPVSQLFELE (224 aa)) form a necessary for interaction with USP7 region. The tract at residues 384–724 (DKSEEGERKK…PRPGTCKTSV (341 aa)) is disordered. The Nuclear localization signal signature appears at 391–395 (RKKRR). 2 positions are modified to phosphoserine: S412 and S424. The stretch at 430-489 (ASRAETDDEDDEESDEEEEEEEEEEEEEATDSEEEEDLEQMQEGQEDDEEEDEEEEAAAG) forms a coiled coil. Residues 435-486 (TDDEDDEESDEEEEEEEEEEEEEATDSEEEEDLEQMQEGQEDDEEEDEEEEA) show a composition bias toward acidic residues. Phosphothreonine is present on T459. Residues S495 and S498 each carry the phosphoserine modification. Positions 496–505 (PMSSLQISNE) are enriched in polar residues. The segment at 501 to 625 (QISNEKNLEP…GVSPHNWGDS (125 aa)) is interaction with MAP3K5. At K512 the chain carries N6-acetyllysine. Over residues 514–524 (ISRSSGEQQNK) the composition is skewed to polar residues. Over residues 529–542 (SPSLLSEEPLAPSS) the composition is skewed to low complexity. Positions 551–561 (QPEELTLEEES) are enriched in acidic residues. Phosphoserine is present on residues S561 and S580. A compositionally biased stretch (polar residues) spans 578-590 (TPSSVETDISSSR). The interval 626-740 (GPPCKKSRKE…EEIIVLSDSD (115 aa)) is interaction with SPOP. (Microbial infection) Interaction with Puumala hantavirus nucleoprotein stretches follow at residues 627 to 634 (PPCKKSRK) and 658 to 663 (KNGKKI). Positions 628–634 (PCKKSRK) match the Nuclear localization signal motif. Residues K630 and K631 each participate in a glycyl lysine isopeptide (Lys-Gly) (interchain with G-Cter in SUMO1) cross-link. The span at 650–660 (ERQRSVHEKNG) shows a compositional bias: basic and acidic residues. Residues S668 and S671 each carry the phosphoserine modification. The span at 673–683 (LASLAPVADSS) shows a compositional bias: low complexity. A phosphoserine mark is found at S688, S702, S737, and S739. Over residues 693–711 (LVTSSLCIPSPARLSQTPH) the composition is skewed to polar residues. Residues 733-740 (IIVLSDSD) form a sumo interaction motif (SIM) region.

This sequence belongs to the DAXX family. As to quaternary structure, homomultimer. Interacts (via C-terminus) with TNFRSF6 (via death domain). Interacts with PAX5, SLC2A4/GLUT4, MAP3K5, TGFBR2, phosphorylated dimeric HSPB1/HSP27, CENPC, ETS1, sumoylated PML, UBE2I, MCRS1 and TP53. Interacts (via N-terminus) with HIPK2 and HIPK3. Interacts with HIPK1, which induces translocation from PML/POD/ND10 nuclear bodies to chromatin and enhances association with HDAC1. Interacts (non-phosphorylated) with PAX3, PAX7, DEK, HDAC1, HDAC2, HDAC3, acetylated histone H4 and histones H2A, H2B, H3, H3.3 and H4. Interacts with SPOP; mediating CUL3-dependent proteasomal degradation. Interacts with CBP; the interaction is dependent the sumoylation of CBP and suppresses CBP transcriptional activity via recruitment of HDAC2 directly in the complex with TP53 and HIPK2. Interacts with AXIN1; the interaction stimulates the interaction of DAXX with TP53, stimulates 'Ser-46' phosphorylation of TP53 on and induces cell death on UV irradiation. Interacts with MDM2; the interaction is direct. Interacts with USP7; the interaction is direct and independent of MDM2 and TP53. Part of a complex with DAXX, MDM2 and USP7 under non-stress conditions. Interacts (via N-terminus) with RASSF1 (via C-terminus); the interaction is independent of MDM2 and TP53; RASSF1 isoform A disrupts interactions among MDM2, DAXX and USP7, thus contributing to the efficient activation of TP53 by promoting MDM2 self-ubiquitination in cell-cycle checkpoint control in response to DNA damage. Interacts with ATRX to form the chromatin remodeling complex ATRX:DAXX. Interacts with HSF1 (via homotrimeric form preferentially); this interaction relieves homotrimeric HSF1 from repression of its transcriptional activity by HSP90-dependent multichaperone complex upon heat shock. Interacts with SUMO1P1/SUMO5. (Microbial infection) Interacts with human cytomegalovirus/HHV-5 tegument phosphoprotein pp71 and protein UL123. In terms of assembly, (Microbial infection) Interacts with Epstein-Barr virus protein BNRF1. As to quaternary structure, (Microbial infection) Interacts with human adenovirus 5 E1B-55K protein; this interaction might alterate the normal interactions of DAXX, PML, and TP53, which may contribute to cell transformation. (Microbial infection) Interacts with Puumala hantavirus nucleoprotein. Post-translationally, sumoylated with SUMO1 on multiple lysine residues. In terms of processing, phosphorylated by HIPK1 upon glucose deprivation. Polyubiquitinated; which is promoted by CUL3 and SPOP and results in proteasomal degradation. Ubiquitinated by MDM2; inducing its degradation. Deubiquitinated by USP7; leading to stabilize it. As to expression, ubiquitous.

The protein resides in the cytoplasm. The protein localises to the nucleus. It localises to the nucleoplasm. It is found in the PML body. Its subcellular location is the nucleolus. The protein resides in the chromosome. The protein localises to the centromere. Functionally, transcription corepressor known to repress transcriptional potential of several sumoylated transcription factors. Down-regulates basal and activated transcription. Its transcription repressor activity is modulated by recruiting it to subnuclear compartments like the nucleolus or PML/POD/ND10 nuclear bodies through interactions with MCSR1 and PML, respectively. Seems to regulate transcription in PML/POD/ND10 nuclear bodies together with PML and may influence TNFRSF6-dependent apoptosis thereby. Inhibits transcriptional activation of PAX3 and ETS1 through direct protein-protein interactions. Modulates PAX5 activity; the function seems to involve CREBBP. Acts as an adapter protein in a MDM2-DAXX-USP7 complex by regulating the RING-finger E3 ligase MDM2 ubiquitination activity. Under non-stress condition, in association with the deubiquitinating USP7, prevents MDM2 self-ubiquitination and enhances the intrinsic E3 ligase activity of MDM2 towards TP53, thereby promoting TP53 ubiquitination and subsequent proteasomal degradation. Upon DNA damage, its association with MDM2 and USP7 is disrupted, resulting in increased MDM2 autoubiquitination and consequently, MDM2 degradation, which leads to TP53 stabilization. Acts as a histone chaperone that facilitates deposition of histone H3.3. Acts as a targeting component of the chromatin remodeling complex ATRX:DAXX which has ATP-dependent DNA translocase activity and catalyzes the replication-independent deposition of histone H3.3 in pericentric DNA repeats outside S-phase and telomeres, and the in vitro remodeling of H3.3-containing nucleosomes. Does not affect the ATPase activity of ATRX but alleviates its transcription repression activity. Upon neuronal activation associates with regulatory elements of selected immediate early genes where it promotes deposition of histone H3.3 which may be linked to transcriptional induction of these genes. Required for the recruitment of histone H3.3:H4 dimers to PML-nuclear bodies (PML-NBs); the process is independent of ATRX and facilitated by ASF1A; PML-NBs are suggested to function as regulatory sites for the incorporation of newly synthesized histone H3.3 into chromatin. In case of overexpression of centromeric histone variant CENPA (as found in various tumors) is involved in its mislocalization to chromosomes; the ectopic localization involves a heterotypic tetramer containing CENPA, and histones H3.3 and H4 and decreases binding of CTCF to chromatin. Proposed to mediate activation of the JNK pathway and apoptosis via MAP3K5 in response to signaling from TNFRSF6 and TGFBR2. Interaction with HSPB1/HSP27 may prevent interaction with TNFRSF6 and MAP3K5 and block DAXX-mediated apoptosis. In contrast, in lymphoid cells JNC activation and TNFRSF6-mediated apoptosis may not involve DAXX. Shows restriction activity towards human cytomegalovirus (HCMV). Plays a role as a positive regulator of the heat shock transcription factor HSF1 activity during the stress protein response. This Homo sapiens (Human) protein is Death domain-associated protein 6 (DAXX).